The following is a 256-amino-acid chain: 5-oxoprolinase subunit A 2 (256 aa).

The protein belongs to the LamB/PxpA family. In terms of assembly, forms a complex composed of PxpA, PxpB and PxpC.

It catalyses the reaction 5-oxo-L-proline + ATP + 2 H2O = L-glutamate + ADP + phosphate + H(+). In terms of biological role, catalyzes the cleavage of 5-oxoproline to form L-glutamate coupled to the hydrolysis of ATP to ADP and inorganic phosphate. The chain is 5-oxoprolinase subunit A 2 from Bradyrhizobium diazoefficiens (strain JCM 10833 / BCRC 13528 / IAM 13628 / NBRC 14792 / USDA 110).